The sequence spans 32 residues: Alpha-2-macroglobulin homolog (32 aa).

A cross-link (isoglutamyl cysteine thioester (Cys-Gln)) is located at residues cysteine 16–glutamine 19.

The protein belongs to the protease inhibitor I39 (alpha-2-macroglobulin) family. In terms of assembly, homodimer; disulfide-linked.

The protein localises to the secreted. In terms of biological role, is able to inhibit all four classes of proteinases by a unique 'trapping' mechanism. This protein has a peptide stretch, called the 'bait region' which contains specific cleavage sites for different proteinases. When a proteinase cleaves the bait region, a conformational change is induced in the protein which traps the proteinase. The entrapped enzyme remains active against low molecular weight substrates (activity against high molecular weight substrates is greatly reduced). Following cleavage in the bait region a thioester bond is hydrolyzed and mediates the covalent binding of the protein to the proteinase. The sequence is that of Alpha-2-macroglobulin homolog from Pacifastacus leniusculus (Signal crayfish).